A 290-amino-acid chain; its full sequence is MYSFLFTKMHGLGNSYIYVDLFRETLPEEDLPAIARSVADVHTGIGSDGLILICPSEQAPVKMRIFNSDGSEGKNCGNGLRCVAKYAYEHGIVRDRSFLIETLSGLVEAEVTVENGEVTSVTIDMGEPRLRRSAIPMTGPEAEQVVAESFAIDGREYEITAVSMGNPHVIFYVDDIEKAPVTTLGPVVEKDARFPEGVNVEFVEVVSERELHFRVWERGSGVTQACGTGACAAVVASVLNGKTARGVETVVHLAGGDLTITWGHDGKVRMTGPAETVCTGVYYYRGGQNG.

Substrate-binding residues include N14 and N67. C76 functions as the Proton donor in the catalytic mechanism. Substrate-binding positions include 77 to 78, N166, N199, and 217 to 218; these read GN and ER. Catalysis depends on C226, which acts as the Proton acceptor. Substrate is bound at residue 227-228; that stretch reads GT.

It belongs to the diaminopimelate epimerase family. In terms of assembly, homodimer.

Its subcellular location is the cytoplasm. The enzyme catalyses (2S,6S)-2,6-diaminopimelate = meso-2,6-diaminopimelate. Its pathway is amino-acid biosynthesis; L-lysine biosynthesis via DAP pathway; DL-2,6-diaminopimelate from LL-2,6-diaminopimelate: step 1/1. Catalyzes the stereoinversion of LL-2,6-diaminopimelate (L,L-DAP) to meso-diaminopimelate (meso-DAP), a precursor of L-lysine and an essential component of the bacterial peptidoglycan. This chain is Diaminopimelate epimerase, found in Geobacillus thermodenitrificans (strain NG80-2).